Consider the following 53-residue polypeptide: MLRYALVFFIIAIIAAVLGFGGIAAGAAEIAKILFYIFVVIFLVTLVLGVARR.

The next 2 helical transmembrane spans lie at 5–25 (ALVF…GIAA) and 30–50 (IAKI…VLGV).

It belongs to the UPF0391 family.

It is found in the cell membrane. The polypeptide is UPF0391 membrane protein BPSS2216 (Burkholderia pseudomallei (strain K96243)).